A 104-amino-acid chain; its full sequence is Cell division topological specificity factor (104 aa).

Belongs to the MinE family.

Its function is as follows. Prevents the cell division inhibition by proteins MinC and MinD at internal division sites while permitting inhibition at polar sites. This ensures cell division at the proper site by restricting the formation of a division septum at the midpoint of the long axis of the cell. This chain is Cell division topological specificity factor, found in Sorangium cellulosum (strain So ce56) (Polyangium cellulosum (strain So ce56)).